Consider the following 100-residue polypeptide: Small ribosomal subunit protein eS24 (100 aa).

Belongs to the eukaryotic ribosomal protein eS24 family.

This chain is Small ribosomal subunit protein eS24, found in Methanothermobacter thermautotrophicus (strain ATCC 29096 / DSM 1053 / JCM 10044 / NBRC 100330 / Delta H) (Methanobacterium thermoautotrophicum).